The sequence spans 418 residues: S-adenosylmethionine synthase (418 aa).

H16 contacts ATP. Position 18 (D18) interacts with Mg(2+). K(+) is bound at residue E44. Residues E57 and Q100 each coordinate L-methionine. The tract at residues 100 to 110 (QSPDIAQGVDS) is flexible loop. Residues 174 to 176 (DGK), D259, 265 to 266 (RK), A282, and K286 each bind ATP. D259 is a binding site for L-methionine. K290 provides a ligand contact to L-methionine.

Belongs to the AdoMet synthase family. In terms of assembly, homotetramer; dimer of dimers. It depends on Mg(2+) as a cofactor. K(+) serves as cofactor.

Its subcellular location is the cytoplasm. The enzyme catalyses L-methionine + ATP + H2O = S-adenosyl-L-methionine + phosphate + diphosphate. The protein operates within amino-acid biosynthesis; S-adenosyl-L-methionine biosynthesis; S-adenosyl-L-methionine from L-methionine: step 1/1. Catalyzes the formation of S-adenosylmethionine (AdoMet) from methionine and ATP. The overall synthetic reaction is composed of two sequential steps, AdoMet formation and the subsequent tripolyphosphate hydrolysis which occurs prior to release of AdoMet from the enzyme. The chain is S-adenosylmethionine synthase from Acaryochloris marina (strain MBIC 11017).